Here is a 514-residue protein sequence, read N- to C-terminus: Retron Vc95 probable ATPase (514 aa).

The short motif at 92 to 99 (GNNGSGKS) is the ATP-binding element.

In terms of biological role, probable ATPase component of antiviral defense system retron Vc95, composed of a non-coding RNA (ncRNA), a reverse transcriptase (RT), this protein and a putative HNH endonuclease. Expression of retron Vc95 confers protection against bacteriophages T2, T4 and T6. At multiplicity of infection (MOI) of 0.02 cultures slow growth when infected with T4 but do not collapse, at MOI 2 cultures enter growth stasis. In Vibrio cholerae serotype O1 biovar El Tor, this protein is Retron Vc95 probable ATPase.